Here is a 201-residue protein sequence, read N- to C-terminus: Small ribosomal subunit protein uS4 (201 aa).

In terms of domain architecture, S4 RNA-binding spans 91 to 151 (SRLDNVVYRA…EKSRSMLWFE (61 aa)).

Belongs to the universal ribosomal protein uS4 family. In terms of assembly, part of the 30S ribosomal subunit. Contacts protein S5. The interaction surface between S4 and S5 is involved in control of translational fidelity.

Functionally, one of the primary rRNA binding proteins, it binds directly to 16S rRNA where it nucleates assembly of the body of the 30S subunit. In terms of biological role, with S5 and S12 plays an important role in translational accuracy. The polypeptide is Small ribosomal subunit protein uS4 (Corynebacterium jeikeium (strain K411)).